Reading from the N-terminus, the 72-residue chain is Translation initiation factor IF-1 (72 aa).

The 72-residue stretch at 1 to 72 folds into the S1-like domain; the sequence is MAKEDVIEVE…TRGRITYRFK (72 aa).

This sequence belongs to the IF-1 family. Component of the 30S ribosomal translation pre-initiation complex which assembles on the 30S ribosome in the order IF-2 and IF-3, IF-1 and N-formylmethionyl-tRNA(fMet); mRNA recruitment can occur at any time during PIC assembly.

It is found in the cytoplasm. In terms of biological role, one of the essential components for the initiation of protein synthesis. Stabilizes the binding of IF-2 and IF-3 on the 30S subunit to which N-formylmethionyl-tRNA(fMet) subsequently binds. Helps modulate mRNA selection, yielding the 30S pre-initiation complex (PIC). Upon addition of the 50S ribosomal subunit IF-1, IF-2 and IF-3 are released leaving the mature 70S translation initiation complex. The chain is Translation initiation factor IF-1 from Listeria innocua serovar 6a (strain ATCC BAA-680 / CLIP 11262).